The sequence spans 454 residues: Tubulin beta-3 chain (454 aa).

Gln11, Glu75, Ser144, Gly148, Thr149, Gly150, Asn210, and Asn232 together coordinate GTP. Position 75 (Glu75) interacts with Mg(2+). Residues 435-454 form a disordered region; the sequence is TADDEFDPEVNQEEVEGDCI.

Belongs to the tubulin family. As to quaternary structure, dimer of alpha and beta chains. A typical microtubule is a hollow water-filled tube with an outer diameter of 25 nm and an inner diameter of 15 nM. Alpha-beta heterodimers associate head-to-tail to form protofilaments running lengthwise along the microtubule wall with the beta-tubulin subunit facing the microtubule plus end conferring a structural polarity. Microtubules usually have 13 protofilaments but different protofilament numbers can be found in some organisms and specialized cells. Mg(2+) is required as a cofactor.

Its subcellular location is the cytoplasm. It localises to the cytoskeleton. Its function is as follows. Tubulin is the major constituent of microtubules, a cylinder consisting of laterally associated linear protofilaments composed of alpha- and beta-tubulin heterodimers. Microtubules grow by the addition of GTP-tubulin dimers to the microtubule end, where a stabilizing cap forms. Below the cap, tubulin dimers are in GDP-bound state, owing to GTPase activity of alpha-tubulin. This chain is Tubulin beta-3 chain (betaTub60D), found in Drosophila melanogaster (Fruit fly).